Consider the following 370-residue polypeptide: Glutamate 5-kinase (370 aa).

Lys-11 is a binding site for ATP. Ser-52, Asp-139, and Asn-151 together coordinate substrate. ATP contacts are provided by residues 171 to 172 and 213 to 219; these read TD and TGGMATK. Residues 278–356 enclose the PUA domain; the sequence is TGKLLLDAGA…DQIVQILGYE (79 aa).

This sequence belongs to the glutamate 5-kinase family.

The protein localises to the cytoplasm. The enzyme catalyses L-glutamate + ATP = L-glutamyl 5-phosphate + ADP. The protein operates within amino-acid biosynthesis; L-proline biosynthesis; L-glutamate 5-semialdehyde from L-glutamate: step 1/2. Functionally, catalyzes the transfer of a phosphate group to glutamate to form L-glutamate 5-phosphate. In Synechococcus sp. (strain ATCC 27144 / PCC 6301 / SAUG 1402/1) (Anacystis nidulans), this protein is Glutamate 5-kinase.